We begin with the raw amino-acid sequence, 247 residues long: ATP synthase subunit a, chloroplastic (247 aa).

The next 5 helical transmembrane spans lie at 38–58 (QVLI…TIAV), 95–115 (VPFI…GALF), 134–154 (INTT…AGLT), 199–219 (LVVV…VMFL), and 220–240 (GLFT…AYIG).

The protein belongs to the ATPase A chain family. In terms of assembly, F-type ATPases have 2 components, CF(1) - the catalytic core - and CF(0) - the membrane proton channel. CF(1) has five subunits: alpha(3), beta(3), gamma(1), delta(1), epsilon(1). CF(0) has four main subunits: a, b, b' and c.

It is found in the plastid. Its subcellular location is the chloroplast thylakoid membrane. In terms of biological role, key component of the proton channel; it plays a direct role in the translocation of protons across the membrane. The protein is ATP synthase subunit a, chloroplastic of Piper cenocladum (Ant piper).